Reading from the N-terminus, the 201-residue chain is Recombination protein RecR (201 aa).

The C4-type zinc finger occupies 57 to 72; that stretch reads CKLCQIYTEQPLCNIC. A Toprim domain is found at 80–175; it reads TLLCVVESPA…KCSRIAHGVP (96 aa).

Belongs to the RecR family.

Functionally, may play a role in DNA repair. It seems to be involved in an RecBC-independent recombinational process of DNA repair. It may act with RecF and RecO. In Coxiella burnetii (strain RSA 493 / Nine Mile phase I), this protein is Recombination protein RecR.